A 490-amino-acid polypeptide reads, in one-letter code: Tryptophan 5-hydroxylase 2 (490 aa).

Residue Ser-19 is modified to Phosphoserine. A disordered region spans residues Leu-34–Gly-62. Polar residues predominate over residues Lys-50–Gly-62. The 76-residue stretch at Ala-65–Asn-140 folds into the ACT domain. Residues His-318, His-323, and Glu-363 each coordinate Fe cation.

The protein belongs to the biopterin-dependent aromatic amino acid hydroxylase family. Interacts with DNAJC12. Requires Fe(2+) as cofactor.

The catalysed reaction is (6R)-L-erythro-5,6,7,8-tetrahydrobiopterin + L-tryptophan + O2 = 5-hydroxy-L-tryptophan + (4aS,6R)-4a-hydroxy-L-erythro-5,6,7,8-tetrahydrobiopterin. Its pathway is aromatic compound metabolism; serotonin biosynthesis; serotonin from L-tryptophan: step 1/2. The protein is Tryptophan 5-hydroxylase 2 (TPH2) of Macaca mulatta (Rhesus macaque).